Consider the following 367-residue polypeptide: Glutamate 5-kinase (367 aa).

Lys-10 is an ATP binding site. Substrate-binding residues include Ser-50, Asp-137, and Asn-149. ATP-binding positions include 169-170 (TD) and 211-217 (TGGMETK). Residues 275-353 (AGDITVDDGA…QDISDILGYE (79 aa)) enclose the PUA domain.

This sequence belongs to the glutamate 5-kinase family.

It is found in the cytoplasm. The enzyme catalyses L-glutamate + ATP = L-glutamyl 5-phosphate + ADP. It functions in the pathway amino-acid biosynthesis; L-proline biosynthesis; L-glutamate 5-semialdehyde from L-glutamate: step 1/2. Functionally, catalyzes the transfer of a phosphate group to glutamate to form L-glutamate 5-phosphate. The polypeptide is Glutamate 5-kinase (Sodalis glossinidius (strain morsitans)).